The primary structure comprises 165 residues: Crossover junction endodeoxyribonuclease RuvC (165 aa).

Catalysis depends on residues Asp-7, Glu-67, and Asp-140. 3 residues coordinate Mg(2+): Asp-7, Glu-67, and Asp-140.

Belongs to the RuvC family. Homodimer which binds Holliday junction (HJ) DNA. The HJ becomes 2-fold symmetrical on binding to RuvC with unstacked arms; it has a different conformation from HJ DNA in complex with RuvA. In the full resolvosome a probable DNA-RuvA(4)-RuvB(12)-RuvC(2) complex forms which resolves the HJ. Mg(2+) is required as a cofactor.

The protein localises to the cytoplasm. It catalyses the reaction Endonucleolytic cleavage at a junction such as a reciprocal single-stranded crossover between two homologous DNA duplexes (Holliday junction).. Functionally, the RuvA-RuvB-RuvC complex processes Holliday junction (HJ) DNA during genetic recombination and DNA repair. Endonuclease that resolves HJ intermediates. Cleaves cruciform DNA by making single-stranded nicks across the HJ at symmetrical positions within the homologous arms, yielding a 5'-phosphate and a 3'-hydroxyl group; requires a central core of homology in the junction. The consensus cleavage sequence is 5'-(A/T)TT(C/G)-3'. Cleavage occurs on the 3'-side of the TT dinucleotide at the point of strand exchange. HJ branch migration catalyzed by RuvA-RuvB allows RuvC to scan DNA until it finds its consensus sequence, where it cleaves and resolves the cruciform DNA. In Caldanaerobacter subterraneus subsp. tengcongensis (strain DSM 15242 / JCM 11007 / NBRC 100824 / MB4) (Thermoanaerobacter tengcongensis), this protein is Crossover junction endodeoxyribonuclease RuvC.